The following is a 328-amino-acid chain: Malate dehydrogenase (328 aa).

Position 12–18 (12–18 (GAAGQIG)) interacts with NAD(+). The substrate site is built by Arg-95 and Arg-101. NAD(+)-binding positions include Asn-108, Gln-115, and 132 to 134 (VGN). Residues Asn-134 and Arg-165 each contribute to the substrate site. His-190 functions as the Proton acceptor in the catalytic mechanism.

Belongs to the LDH/MDH superfamily. MDH type 2 family.

It catalyses the reaction (S)-malate + NAD(+) = oxaloacetate + NADH + H(+). In terms of biological role, catalyzes the reversible oxidation of malate to oxaloacetate. The protein is Malate dehydrogenase of Leptothrix cholodnii (strain ATCC 51168 / LMG 8142 / SP-6) (Leptothrix discophora (strain SP-6)).